An 816-amino-acid polypeptide reads, in one-letter code: tRNA(Met) cytidine acetyltransferase TmcA (816 aa).

Positions 265 and 439 each coordinate ATP. The region spanning 469–664 is the N-acetyltransferase domain; the sequence is ELIRKMEVYL…YTAIVIKPIS (196 aa). Acetyl-CoA-binding positions include 589-591, Glu629, and Arg636; that span reads IAT.

The protein belongs to the TmcA family.

The protein localises to the cytoplasm. It catalyses the reaction cytidine(34) in elongator tRNA(Met) + acetyl-CoA + ATP + H2O = N(4)-acetylcytidine(34) in elongator tRNA(Met) + ADP + phosphate + CoA + H(+). It carries out the reaction a cytidine in RNA + acetyl-CoA + ATP + H2O = an N(4)-acetylcytidine in RNA + ADP + phosphate + CoA + H(+). The catalysed reaction is a cytidine in tRNA + acetyl-CoA + ATP + H2O = an N(4)-acetylcytidine in tRNA + ADP + phosphate + CoA + H(+). The enzyme catalyses a cytidine in mRNA + acetyl-CoA + ATP + H2O = an N(4)-acetylcytidine in mRNA + ADP + phosphate + CoA + H(+). Its function is as follows. Catalyzes the formation of N(4)-acetylcytidine (ac(4)C) at the wobble position of tRNA(Met), by using acetyl-CoA as an acetyl donor and ATP (or GTP). Catalyzes the formation of 233 N(4)-acetylcytidine (ac(4)C) sites in RNA, on the middle C of a CCG motif. Modifications are found in rRNA, ncRNA, mRNA and tRNA. More acetylation is observed at 85 than at 65 or 75 degrees Celsius. The sequence is that of tRNA(Met) cytidine acetyltransferase TmcA from Pyrococcus furiosus (strain ATCC 43587 / DSM 3638 / JCM 8422 / Vc1).